We begin with the raw amino-acid sequence, 148 residues long: MSTKTKSPIGQRTVIGFDFGKKYIGVAVGQEMTGSATPLGSVKATDGIPHWDNLAKYLKEWQPDFIVVGLPLNMDGSEQQLTLDAKKFGNRIHGRFGIQVEFQDERLTTADAKEQLFARGGFKNLKKDNIDAESARLIIESYFEQQYT.

This sequence belongs to the YqgF nuclease family.

The protein resides in the cytoplasm. In terms of biological role, could be a nuclease involved in processing of the 5'-end of pre-16S rRNA. The chain is Putative pre-16S rRNA nuclease from Colwellia psychrerythraea (strain 34H / ATCC BAA-681) (Vibrio psychroerythus).